A 215-amino-acid chain; its full sequence is Deoxyadenosine kinase (215 aa).

Residue 9 to 17 coordinates ATP; that stretch reads GPIGAGKSS. Residues Glu-33, Tyr-45, and Asn-56 each coordinate substrate. Catalysis depends on Asp-79, which acts as the Proton acceptor. Substrate is bound by residues Arg-80, Asp-85, and Glu-150.

The protein belongs to the DCK/DGK family. Heterodimer of a deoxyadenosine (DAK) and a deoxyguanosine kinase (DGK).

It catalyses the reaction 2'-deoxyadenosine + ATP = dAMP + ADP + H(+). In terms of biological role, DGK/DAK plays an essential role in generating the deoxyribonucleotide precursors, dGTP and dATP, for DNA metabolism. The protein is Deoxyadenosine kinase of Lactobacillus acidophilus (strain ATCC 700396 / NCK56 / N2 / NCFM).